The following is a 429-amino-acid chain: Serum response factor-binding protein 1 (429 aa).

Ala2 is subject to N-acetylalanine. Coiled-coil stretches lie at residues 42 to 67 and 108 to 144; these read KGTE…AMKE and LLKK…EDNH. Polar residues-rich tracts occupy residues 128-138 and 146-160; these read QNVTEVESSKN and KNTL…NLQR. Disordered regions lie at residues 128–285 and 311–429; these read QNVT…GDDF and EKVF…TFDD. Residues 183 to 195 show a composition bias toward basic and acidic residues; that stretch reads NSKEKIAKMEHGP. Lys190 is covalently cross-linked (Glycyl lysine isopeptide (Lys-Gly) (interchain with G-Cter in SUMO2)). Phosphoserine is present on residues Ser203, Ser205, Ser264, Ser279, and Ser281. Positions 249-265 are enriched in acidic residues; that stretch reads GGEELCEEEKEYFDDST. The span at 311-341 shows a compositional bias: basic and acidic residues; the sequence is EKVFLKEDTGETHGDTRNDKTKPSTETRKLE. Lys316 is covalently cross-linked (Glycyl lysine isopeptide (Lys-Gly) (interchain with G-Cter in SUMO2)). Ser349, Ser351, and Ser367 each carry phosphoserine. The span at 357–367 shows a compositional bias: basic and acidic residues; that stretch reads NFKEQAPKTRS. Residues 373–383 show a composition bias toward polar residues; it reads NEPQFKNQFNK.

Interacts with SRF. Forms complexes with SRF and SRF cofactors ARID2, MYOCD and NKX2-5. Interacts with the N-terminus of SLC2A4.

It is found in the cytoplasm. Its subcellular location is the perinuclear region. May be involved in regulating transcriptional activation of cardiac genes during the aging process. May play a role in biosynthesis and/or processing of SLC2A4 in adipose cells. The protein is Serum response factor-binding protein 1 of Pongo abelii (Sumatran orangutan).